A 63-amino-acid polypeptide reads, in one-letter code: Large ribosomal subunit protein bL35 (63 aa).

The interval 1–22 (MPKMKTKSGATKRFKKTATGFK) is disordered.

It belongs to the bacterial ribosomal protein bL35 family.

The sequence is that of Large ribosomal subunit protein bL35 from Marinobacter nauticus (strain ATCC 700491 / DSM 11845 / VT8) (Marinobacter aquaeolei).